The sequence spans 333 residues: Adenosine deaminase (333 aa).

Histidine 12 and histidine 14 together coordinate Zn(2+). Substrate-binding residues include histidine 14, aspartate 16, and glycine 170. Histidine 197 is a binding site for Zn(2+). The active-site Proton donor is glutamate 200. Zn(2+) is bound at residue aspartate 278. Aspartate 279 is a substrate binding site.

The protein belongs to the metallo-dependent hydrolases superfamily. Adenosine and AMP deaminases family. Adenosine deaminase subfamily. Zn(2+) is required as a cofactor.

The enzyme catalyses adenosine + H2O + H(+) = inosine + NH4(+). It catalyses the reaction 2'-deoxyadenosine + H2O + H(+) = 2'-deoxyinosine + NH4(+). In terms of biological role, catalyzes the hydrolytic deamination of adenosine and 2-deoxyadenosine. The chain is Adenosine deaminase from Shigella boydii serotype 4 (strain Sb227).